The sequence spans 483 residues: Glutamyl-tRNA(Gln) amidotransferase subunit A (483 aa).

Residues K76 and S151 each act as charge relay system in the active site. S175 serves as the catalytic Acyl-ester intermediate.

This sequence belongs to the amidase family. GatA subfamily. As to quaternary structure, heterotrimer of A, B and C subunits.

The catalysed reaction is L-glutamyl-tRNA(Gln) + L-glutamine + ATP + H2O = L-glutaminyl-tRNA(Gln) + L-glutamate + ADP + phosphate + H(+). Its function is as follows. Allows the formation of correctly charged Gln-tRNA(Gln) through the transamidation of misacylated Glu-tRNA(Gln) in organisms which lack glutaminyl-tRNA synthetase. The reaction takes place in the presence of glutamine and ATP through an activated gamma-phospho-Glu-tRNA(Gln). The chain is Glutamyl-tRNA(Gln) amidotransferase subunit A from Pseudomonas fluorescens (strain SBW25).